A 257-amino-acid chain; its full sequence is THAP domain-containing protein 10 (257 aa).

A THAP-type zinc finger spans residues Met-1–His-90. A compositionally biased stretch (polar residues) spans Gln-154–Pro-168. The tract at residues Gln-154–Lys-178 is disordered.

This chain is THAP domain-containing protein 10 (THAP10), found in Homo sapiens (Human).